Reading from the N-terminus, the 258-residue chain is 5'-nucleotidase SurE (258 aa).

Positions 9, 10, 42, and 96 each coordinate a divalent metal cation.

Belongs to the SurE nucleotidase family. A divalent metal cation is required as a cofactor.

The protein resides in the cytoplasm. The enzyme catalyses a ribonucleoside 5'-phosphate + H2O = a ribonucleoside + phosphate. Functionally, nucleotidase that shows phosphatase activity on nucleoside 5'-monophosphates. The polypeptide is 5'-nucleotidase SurE (Campylobacter jejuni subsp. jejuni serotype O:2 (strain ATCC 700819 / NCTC 11168)).